The chain runs to 222 residues: Cytochrome b6 (222 aa).

The chain crosses the membrane as a helical span at residues 39–59; the sequence is IFYCLGGLTLTCFLIQFATGF. Residue Tyr41 participates in heme b binding. Cys42 contributes to the heme c binding site. The heme b site is built by Arg90, His93, Arg94, His107, and Arg110. The next 3 membrane-spanning stretches (helical) occupy residues 97-117, 123-143, and 193-213; these read ASMM…TGGF, LTWV…VTGY, and LHTF…FLMI. Positions 194 and 209 each coordinate heme b. The heme c site is built by Arg214 and Ile218. Heme b is bound at residue Ser219.

It belongs to the cytochrome b family. PetB subfamily. The 4 large subunits of the cytochrome b6-f complex are cytochrome b6, subunit IV (17 kDa polypeptide, PetD), cytochrome f and the Rieske protein, while the 4 small subunits are PetG, PetL, PetM and PetN. The complex functions as a dimer. Heme b serves as cofactor. Requires heme c as cofactor.

The protein resides in the cellular thylakoid membrane. Component of the cytochrome b6-f complex, which mediates electron transfer between photosystem II (PSII) and photosystem I (PSI), cyclic electron flow around PSI, and state transitions. The polypeptide is Cytochrome b6 (Synechocystis sp. (strain ATCC 27184 / PCC 6803 / Kazusa)).